A 133-amino-acid chain; its full sequence is FPRL1 inhibitory protein (133 aa).

The N-terminal stretch at 1–28 (MKKNITKTIIASTVIAAGLLTQTNDAKA) is a signal peptide.

It belongs to the CHIPS/FLIPr family.

It localises to the secreted. May be involved in countering the first line of host defense mechanisms. Impairs the leukocyte response to FPRL1 agonists by binding directly to host FPRL1. Exerts, in vitro, anti-inflammatory activity by inhibiting calcium mobilization and cell migration toward chemoattractants. The protein is FPRL1 inhibitory protein (flr) of Staphylococcus aureus (strain Newman).